The primary structure comprises 421 residues: Plant UBX domain-containing protein 5 (421 aa).

Positions 4–45 (ETNENLINSFIEITSSSREEANFFLESHTWNLDAAVSTFLDN) constitute a UBA domain. Disordered stretches follow at residues 46–171 (DAAA…MMVQ) and 292–338 (ENFT…PSRG). Polar residues predominate over residues 69 to 84 (QSPSQSHSPDYTPSET). Over residues 85-102 (SPSPSRSRSASPSSRAAP) the composition is skewed to low complexity. Residues 231 to 295 (RIMHTITFWL…DLVRRGENFT (65 aa)) form the SEP domain. Residues 312-328 (GASGSGSSSAPQASSAP) show a composition bias toward low complexity. One can recognise a UBX domain in the interval 343–420 (PAAPTTSIQL…GIANAVVIQK (78 aa)).

Interacts with CDC48A (non-hexameric) via its UBX domain.

The sequence is that of Plant UBX domain-containing protein 5 from Arabidopsis thaliana (Mouse-ear cress).